A 509-amino-acid polypeptide reads, in one-letter code: Glucose-1-phosphate adenylyltransferase large subunit 4, chloroplastic/amyloplastic (509 aa).

A chloroplast-targeting transit peptide spans M1–S36.

This sequence belongs to the bacterial/plant glucose-1-phosphate adenylyltransferase family. In terms of assembly, heterotetramer composed of two small and two large subunits. As to expression, expressed in leaves and stems.

Its subcellular location is the plastid. The protein resides in the chloroplast. It carries out the reaction alpha-D-glucose 1-phosphate + ATP + H(+) = ADP-alpha-D-glucose + diphosphate. Its pathway is glycan biosynthesis; starch biosynthesis. Its activity is regulated as follows. Activated by 3'phosphoglycerate, inhibited by orthophosphate. Allosteric regulation. Involved in synthesis of starch. Catalyzes the synthesis of ADP-glucose, a molecule that serves as an activated glycosyl donor for alpha-1,4-glucan synthesis. Essential for starch synthesis in leaf chloroplasts. This chain is Glucose-1-phosphate adenylyltransferase large subunit 4, chloroplastic/amyloplastic, found in Oryza sativa subsp. japonica (Rice).